The chain runs to 388 residues: Processive diacylglycerol beta-glucosyltransferase (388 aa).

It belongs to the glycosyltransferase 28 family. UgtP subfamily.

Its subcellular location is the cell membrane. The enzyme catalyses a 1,2-diacyl-3-O-(beta-D-glucopyranosyl)-sn-glycerol + UDP-alpha-D-glucose = a 1,2-diacyl-3-O-(beta-D-Glc-(1-&gt;6)-beta-D-Glc)-sn-glycerol + UDP + H(+). It carries out the reaction a 1,2-diacyl-3-O-(beta-D-Glc-(1-&gt;6)-beta-D-Glc)-sn-glycerol + UDP-alpha-D-glucose = a 1,2-diacyl-3-O-(beta-D-Glc-(1-&gt;6)-beta-D-Glc-(1-&gt;6)-beta-D-Glc)-sn-glycerol + UDP + H(+). The catalysed reaction is a 1,2-diacyl-sn-glycerol + UDP-alpha-D-glucose = a 1,2-diacyl-3-O-(beta-D-glucopyranosyl)-sn-glycerol + UDP + H(+). It participates in glycolipid metabolism; diglucosyl-diacylglycerol biosynthesis. In terms of biological role, processive glucosyltransferase involved in the biosynthesis of both the bilayer- and non-bilayer-forming membrane glucolipids. Is able to successively transfer up to three glucosyl residues to diacylglycerol (DAG), thereby catalyzing the formation of beta-monoglucosyl-DAG (3-O-(beta-D-glucopyranosyl)-1,2-diacyl-sn-glycerol), beta-diglucosyl-DAG (3-O-(beta-D-glucopyranosyl-beta-(1-&gt;6)-D-glucopyranosyl)-1,2-diacyl-sn-glycerol) and beta-triglucosyl-DAG (3-O-(beta-D-glucopyranosyl-beta-(1-&gt;6)-D-glucopyranosyl-beta-(1-&gt;6)-D-glucopyranosyl)-1,2-diacyl-sn-glycerol). Beta-diglucosyl-DAG is the predominant glycolipid found in Bacillales and is also used as a membrane anchor for lipoteichoic acid (LTA). The protein is Processive diacylglycerol beta-glucosyltransferase of Bacillus cereus (strain 03BB102).